Consider the following 482-residue polypeptide: Altronate oxidoreductase (482 aa).

NAD(+) is bound at residue 18-29; it reads IIQFGEGNFLRA.

This sequence belongs to the mannitol dehydrogenase family. UxaB subfamily.

The enzyme catalyses D-altronate + NAD(+) = keto-D-tagaturonate + NADH + H(+). It participates in carbohydrate metabolism; pentose and glucuronate interconversion. The sequence is that of Altronate oxidoreductase from Shigella sonnei (strain Ss046).